The chain runs to 369 residues: Homoserine O-acetyltransferase (369 aa).

Residues 44-350 (NAILVAHAWT…AYGHDAFLLE (307 aa)) enclose the AB hydrolase-1 domain. The active-site Nucleophile is the Ser-150. Arg-217 lines the substrate pocket. Catalysis depends on residues Asp-311 and His-344. Position 345 (Asp-345) interacts with substrate.

This sequence belongs to the AB hydrolase superfamily. MetX family. In terms of assembly, homodimer.

The protein localises to the cytoplasm. It catalyses the reaction L-homoserine + acetyl-CoA = O-acetyl-L-homoserine + CoA. Its pathway is amino-acid biosynthesis; L-methionine biosynthesis via de novo pathway; O-acetyl-L-homoserine from L-homoserine: step 1/1. Its function is as follows. Transfers an acetyl group from acetyl-CoA to L-homoserine, forming acetyl-L-homoserine. This is Homoserine O-acetyltransferase from Geobacter metallireducens (strain ATCC 53774 / DSM 7210 / GS-15).